We begin with the raw amino-acid sequence, 346 residues long: Probable electron transfer flavoprotein subunit alpha, mitochondrial (346 aa).

285–313 (LYVAIGISGAIQHLAGMKESKMIIAINKD) contacts FAD.

This sequence belongs to the ETF alpha-subunit/FixB family. In terms of assembly, heterodimer of an alpha and a beta subunit. The cofactor is FAD.

The protein resides in the mitochondrion matrix. The electron transfer flavoprotein serves as a specific electron acceptor for several dehydrogenases, including five acyl-CoA dehydrogenases, glutaryl-CoA and sarcosine dehydrogenase. It transfers the electrons to the main mitochondrial respiratory chain via ETF-ubiquinone oxidoreductase (ETF dehydrogenase). This Cryptococcus neoformans var. neoformans serotype D (strain B-3501A) (Filobasidiella neoformans) protein is Probable electron transfer flavoprotein subunit alpha, mitochondrial (ETF1).